Reading from the N-terminus, the 131-residue chain is UPF0292 protein PF1724 (131 aa).

Residues 20 to 103 (KGVIIVEGKR…ETRRELQFIA (84 aa)) enclose the Toprim domain. Residues Glu26, Asp69, and Asp71 each contribute to the Mg(2+) site.

The protein belongs to the UPF0292 family. Requires Mg(2+) as cofactor.

In Pyrococcus furiosus (strain ATCC 43587 / DSM 3638 / JCM 8422 / Vc1), this protein is UPF0292 protein PF1724.